We begin with the raw amino-acid sequence, 214 residues long: UPF0301 protein blr1492 (214 aa).

A disordered region spans residues 1-22 (MAPTGKRTGESTRSTGPAPPSS).

The protein belongs to the UPF0301 (AlgH) family.

The sequence is that of UPF0301 protein blr1492 from Bradyrhizobium diazoefficiens (strain JCM 10833 / BCRC 13528 / IAM 13628 / NBRC 14792 / USDA 110).